Reading from the N-terminus, the 153-residue chain is Aspartate carbamoyltransferase regulatory chain (153 aa).

Residues Cys110, Cys115, Cys138, and Cys141 each contribute to the Zn(2+) site.

It belongs to the PyrI family. Contains catalytic and regulatory chains. It depends on Zn(2+) as a cofactor.

Involved in allosteric regulation of aspartate carbamoyltransferase. The polypeptide is Aspartate carbamoyltransferase regulatory chain (Bacteroides fragilis (strain ATCC 25285 / DSM 2151 / CCUG 4856 / JCM 11019 / LMG 10263 / NCTC 9343 / Onslow / VPI 2553 / EN-2)).